Consider the following 465-residue polypeptide: UDP-N-acetylmuramate--L-alanine ligase (465 aa).

112–118 (GTHGKTT) is a binding site for ATP.

It belongs to the MurCDEF family.

The protein resides in the cytoplasm. The enzyme catalyses UDP-N-acetyl-alpha-D-muramate + L-alanine + ATP = UDP-N-acetyl-alpha-D-muramoyl-L-alanine + ADP + phosphate + H(+). It participates in cell wall biogenesis; peptidoglycan biosynthesis. In terms of biological role, cell wall formation. The polypeptide is UDP-N-acetylmuramate--L-alanine ligase (Burkholderia mallei (strain NCTC 10247)).